We begin with the raw amino-acid sequence, 1089 residues long: MGNTTTKFRKALINGDENLACQIYENNPQLKESLDPNTSYGEPYQHNTPLHYAARHGMNKILGTFLGRDGNPNKRNVHNETSMHLLCMGPQIMISEGALHPRLARPTEDDFRRADCLQMILKWKGAKLDQGEYERAAIDAVDNKKNTPLHYAAASGMKACVELLVKHGGDLFAENENKDTPCDCAEKQHHKDLALNLESQMVFSRDPEAEEIEAEYAALDKREPYEGLRPQDLRRLKDMLIVETADMLQAPLFTAEALLRAHDWDREKLLEAWMSNPENCCQRSGVQMPTPPPSGYNAWDTLPSPRTPRTTRSSVTSPDEISLSPGDLDTSLCDICMCSISVFEDPVDMPCGHDFCRGCWESFLNLKIQEGEAHNIFCPAYDCFQLVPVDIIESVVSKEMDKRYLQFDIKAFVENNPAIKWCPTPGCDRAVRLTKQGSNTSGSDTLSFPLLRAPAVDCGKGHLFCWECLGEAHEPCDCQTWKNWLQKITEMKPEELVGVSEAYEDAANCLWLLTNSKPCANCKSPIQKNEGCNHMQCAKCKYDFCWICLEEWKKHSSSTGGYYRCTRYEVIQHVEEQSKEMTVEAEKKHKRFQELDRFMHYYTRFKNHEHSYQLEQRLLKTAKEKMEQLSRALKETEGGCPDTTFIEDAVHVLLKTRRILKCSYPYGFFLEPKSTKKEIFELMQTDLEMVTEDLAQKVNRPYLRTPRHKIIKAACLVQQKRQEFLASVARGVAPADSPEAPRRSFAGGTWDWEYLGFASPEEYAEFQYRRRHRQRRRGDVHSLLSNPPDPDEPSESTLDIPEGGSSSRRPGTSVVSSASMSVLHSSSLRDYTPASRSENQDSLQALSSLDEDDPNILLAIQLSLQESGLALDEETRDFLSNEASLGAIGTSLPSRLDSVPRNTDSPRAALSSSELLELGDSLMRLGAENDPFSTDTLSSHPLSEARSDFCPSSSDPDSAGQDPNINDNLLGNIMAWFHDMNPQSIALIPPATTEISADSQLPCIKDGSEGVKDVELVLPEDSMFEDASVSEGRGTQIEENPLEENILAGEAASQAGDSGNEAANRGDGSDVSSQTPQTSSDWLEQVHLV.

The N-myristoyl glycine moiety is linked to residue G2. ANK repeat units follow at residues Q45–K74 and K144–A173. The interval C281–I321 is disordered. Over residues P303 to P318 the composition is skewed to low complexity. A TRIAD supradomain region spans residues D329–E569. C333, C336, C351, H353, C356, C359, C378, C383, C465, C468, H473, C478, C519, and C522 together coordinate Zn(2+). An RING-type 1 zinc finger spans residues C333–C383. The IBR-type zinc-finger motif lies at D401–C478. The RING-type 2; atypical zinc-finger motif lies at C519 to C548. C532 is a catalytic residue. Residues C537, C540, C545, C548, H555, and C565 each coordinate Zn(2+). A coiled-coil region spans residues E575 to C640. S737 is modified (phosphoserine). Residues R776–S821 are disordered. Positions E851 to A870 constitute a UIM domain. Residues S884 and S911 each carry the phosphoserine modification. Disordered regions lie at residues G889–S912, A927–N964, and D1026–V1089. 2 stretches are compositionally biased toward polar residues: residues P931–P941 and D1070–W1082.

The protein belongs to the RBR family.

The enzyme catalyses [E2 ubiquitin-conjugating enzyme]-S-ubiquitinyl-L-cysteine + [acceptor protein]-L-lysine = [E2 ubiquitin-conjugating enzyme]-L-cysteine + [acceptor protein]-N(6)-ubiquitinyl-L-lysine.. In terms of biological role, might act as an E3 ubiquitin-protein ligase, or as part of E3 complex, which accepts ubiquitin from specific E2 ubiquitin-conjugating enzymes and then transfers it to substrates. This chain is Ankyrin repeat and IBR domain-containing protein 1 (ANKIB1), found in Homo sapiens (Human).